A 354-amino-acid chain; its full sequence is Glycerol-1-phosphate dehydrogenase [NAD(P)+] (354 aa).

NAD(+)-binding positions include 103 to 107 (GRSVD) and 125 to 128 (TAAS). Substrate is bound at residue Asp-130. Ser-134 provides a ligand contact to NAD(+). Asp-176 provides a ligand contact to substrate. Residues Asp-176 and His-255 each coordinate Zn(2+). A substrate-binding site is contributed by His-259. Residue His-271 coordinates Zn(2+).

Belongs to the glycerol-1-phosphate dehydrogenase family. As to quaternary structure, homodimer. It depends on Zn(2+) as a cofactor.

It localises to the cytoplasm. It catalyses the reaction sn-glycerol 1-phosphate + NAD(+) = dihydroxyacetone phosphate + NADH + H(+). The enzyme catalyses sn-glycerol 1-phosphate + NADP(+) = dihydroxyacetone phosphate + NADPH + H(+). It functions in the pathway membrane lipid metabolism; glycerophospholipid metabolism. Its function is as follows. Catalyzes the NAD(P)H-dependent reduction of dihydroxyacetonephosphate (DHAP or glycerone phosphate) to glycerol 1-phosphate (G1P). The G1P thus generated is used as the glycerophosphate backbone of phospholipids in the cellular membranes of Archaea. This Nitrosopumilus maritimus (strain SCM1) protein is Glycerol-1-phosphate dehydrogenase [NAD(P)+].